Reading from the N-terminus, the 658-residue chain is Biosynthetic arginine decarboxylase (658 aa).

Lys-127 carries the post-translational modification N6-(pyridoxal phosphate)lysine. 307 to 317 is a binding site for substrate; the sequence is FDVGGGLGVDY.

The protein belongs to the Orn/Lys/Arg decarboxylase class-II family. SpeA subfamily. In terms of assembly, homotetramer. The cofactor is pyridoxal 5'-phosphate. Requires Mg(2+) as cofactor. Post-translationally, processed post-translationally to a 70 kDa mature form. The N-terminus is blocked.

It is found in the periplasm. It catalyses the reaction L-arginine + H(+) = agmatine + CO2. The protein operates within amine and polyamine biosynthesis; agmatine biosynthesis; agmatine from L-arginine: step 1/1. Its activity is regulated as follows. Down-regulated by polyamine end products putrescine and spermidine. Catalyzes the biosynthesis of agmatine from arginine. The chain is Biosynthetic arginine decarboxylase (speA) from Escherichia coli (strain K12).